Reading from the N-terminus, the 239-residue chain is Protein G1-like8 (239 aa).

2 disordered regions span residues 1–35 and 149–239; these read MEGG…RYES and KARG…ATRV. Residues 9 to 29 show a composition bias toward low complexity; it reads DAQAQAQPVAQAPPAMQPMQQ. The 128-residue stretch at 32–159 folds into the ALOG domain; that stretch reads RYESQKRRDW…ARGIPYEKKK (128 aa). Residues 157 to 161 carry the Nuclear localization signal motif; the sequence is KKKRK. Residues 167–178 are compositionally biased toward pro residues; sequence QPPPQPPLPPQH. 2 stretches are compositionally biased toward low complexity: residues 179 to 215 and 223 to 239; these read QPGA…ATSQ and TTTT…ATRV.

It belongs to the plant homeotic and developmental regulators ALOG protein family.

The protein localises to the nucleus. Probable transcription regulator that acts as a developmental regulator by promoting cell growth in response to light. The polypeptide is Protein G1-like8 (Oryza sativa subsp. indica (Rice)).